Here is a 394-residue protein sequence, read N- to C-terminus: Class II hydrophobin TH1 (394 aa).

An N-terminal signal peptide occupies residues 1 to 16; that stretch reads MKFLAAASLLVASTLA. The interval 17–42 is disordered; sequence VPTSSGGSCRPRPPPGGGNGGNGGNG. The span at 33–42 shows a compositional bias: gly residues; that stretch reads GGNGGNGGNG. The segment at 48-117 is hydrophobin 1; that stretch reads GYQPCPAGLY…GQAVLCQDSI (70 aa). 4 disulfide bridges follow: C52–C101, C62–C92, C63–C75, and C102–C113. Residues 135-157 are disordered; sequence GNGGNNGGNTDYPGGNGGNNGGN. Residues 148-157 are compositionally biased toward gly residues; it reads GGNGGNNGGN. Hydrophobin stretches follow at residues 200 to 270 and 326 to 394; these read GYQA…QPAI and GSFK…CTGA.

This sequence belongs to the cerato-ulmin hydrophobin family. In terms of assembly, homotetramer. Further self-assembles to form highly ordered films at water-air interfaces through intermolecular interactions. In terms of processing, several N-termini starting at positions 17, 20, 22, 28 and 48 have been identified by direct sequencing. Contains a number of intrachain disulfide bonds. Post-translationally, not glycosylated.

It localises to the secreted. The protein localises to the cell wall. Its function is as follows. Aerial growth, conidiation, and dispersal of filamentous fungi in the environment rely upon a capability of their secreting small amphipathic proteins called hydrophobins (HPBs) with low sequence identity. Class I can self-assemble into an outermost layer of rodlet bundles on aerial cell surfaces, conferring cellular hydrophobicity that supports fungal growth, development and dispersal; whereas Class II form highly ordered films at water-air interfaces through intermolecular interactions but contribute nothing to the rodlet structure. TH1 is a class II hydrophobin that reduces water surface tension dramatically upon assembly at the water-air interface and plays a role in the formation of aerial hyphae. The chain is Class II hydrophobin TH1 (TH1) from Claviceps fusiformis (Ergot fungus).